Here is a 109-residue protein sequence, read N- to C-terminus: uncharacterized protein (109 aa).

A disordered region spans residues 63–109 (DPSTWEPEEHETEHCRGHTLPEKKQKPQGGHGSDKDEDKGNCGCDHC). 2 stretches are compositionally biased toward basic and acidic residues: residues 73 to 87 (ETEH…EKKQ) and 94 to 109 (GSDK…CDHC).

This is an uncharacterized protein from Caenorhabditis elegans.